The following is a 335-amino-acid chain: MIQFQRLHKSYSVDGRQIVALHPLDLRIGPGEVFGIIGHSGAGKSTLIRLINRLEEPSGGRLLIGEEDVTALDRQGLRALRRRIGMIFQHFNLLSSRTVAGNVAFPLELAGTPRAEIDARVAELLARVGLQEHANKYPAQLSGGQKQRVGIARALATRPQILLCDEATSALDPQTTASVLQLLAQINRELGLTIVLITHEMDVIRRVCDRVAVLDAGKLVETGPVTEVFLHPKHATTRRFVSEAEHVDEAELHRDFAAVGGRIVRLTFLGNGTYEPVLGRIARETGVDYNILSGRVDRIKDTPYGQLIVALTGGDHNAARAGFVAAGVQVEELRV.

The region spanning 2–241 (IQFQRLHKSY…PKHATTRRFV (240 aa)) is the ABC transporter domain. An ATP-binding site is contributed by 38–45 (GHSGAGKS).

The protein belongs to the ABC transporter superfamily. Methionine importer (TC 3.A.1.24) family. The complex is composed of two ATP-binding proteins (MetN), two transmembrane proteins (MetI) and a solute-binding protein (MetQ).

The protein resides in the cell inner membrane. It carries out the reaction L-methionine(out) + ATP + H2O = L-methionine(in) + ADP + phosphate + H(+). It catalyses the reaction D-methionine(out) + ATP + H2O = D-methionine(in) + ADP + phosphate + H(+). In terms of biological role, part of the ABC transporter complex MetNIQ involved in methionine import. Responsible for energy coupling to the transport system. This is Methionine import ATP-binding protein MetN from Xanthomonas axonopodis pv. citri (strain 306).